A 195-amino-acid polypeptide reads, in one-letter code: dITP/XTP pyrophosphatase (195 aa).

Residue 8 to 13 coordinates substrate; sequence SGNAGK. Mg(2+)-binding residues include E38 and D67. The active-site Proton acceptor is the D67. Substrate contacts are provided by residues S68, 146-149, K169, and 174-175; these read FGYD and HR.

Belongs to the HAM1 NTPase family. Homodimer. Requires Mg(2+) as cofactor.

It carries out the reaction XTP + H2O = XMP + diphosphate + H(+). It catalyses the reaction dITP + H2O = dIMP + diphosphate + H(+). The catalysed reaction is ITP + H2O = IMP + diphosphate + H(+). Pyrophosphatase that catalyzes the hydrolysis of nucleoside triphosphates to their monophosphate derivatives, with a high preference for the non-canonical purine nucleotides XTP (xanthosine triphosphate), dITP (deoxyinosine triphosphate) and ITP. Seems to function as a house-cleaning enzyme that removes non-canonical purine nucleotides from the nucleotide pool, thus preventing their incorporation into DNA/RNA and avoiding chromosomal lesions. In Parasynechococcus marenigrum (strain WH8102), this protein is dITP/XTP pyrophosphatase.